The sequence spans 63 residues: Large ribosomal subunit protein bL28 (63 aa).

The protein belongs to the bacterial ribosomal protein bL28 family.

The protein is Large ribosomal subunit protein bL28 of Mycoplasmopsis synoviae (strain 53) (Mycoplasma synoviae).